A 220-amino-acid polypeptide reads, in one-letter code: Ribose-5-phosphate isomerase A (220 aa).

Substrate contacts are provided by residues 25-28 (TGST), 80-83 (DGAD), and 93-96 (KGGG). The Proton acceptor role is filled by Glu-102. Position 120 (Lys-120) interacts with substrate.

It belongs to the ribose 5-phosphate isomerase family. As to quaternary structure, homodimer.

It carries out the reaction aldehydo-D-ribose 5-phosphate = D-ribulose 5-phosphate. Its pathway is carbohydrate degradation; pentose phosphate pathway; D-ribose 5-phosphate from D-ribulose 5-phosphate (non-oxidative stage): step 1/1. Catalyzes the reversible conversion of ribose-5-phosphate to ribulose 5-phosphate. This is Ribose-5-phosphate isomerase A from Bacillus thuringiensis subsp. konkukian (strain 97-27).